The chain runs to 887 residues: Phosphatidylinositol 3-kinase catalytic subunit type 3 (887 aa).

The region spanning 35 to 184 is the C2 PI3K-type domain; it reads YKAVLEDPML…LAKLTKAHRQ (150 aa). A disordered region spans residues 149-170; it reads VEADGSEPTRTPGRTSSTLSED. Over residues 156-170 the composition is skewed to polar residues; that stretch reads PTRTPGRTSSTLSED. At Thr-163 the chain carries Phosphothreonine; by AMPK. Ser-165 bears the Phosphoserine; by AMPK mark. Ser-244, Ser-261, and Ser-282 each carry phosphoserine. The 238-residue stretch at 283-520 folds into the PIK helical domain; that stretch reads DHDLKPNATT…PKTHEMYLNV (238 aa). The interval 416 to 467 is disordered; that stretch reads EPTKKDSQASVSESLSSSGVSSADIDSSQIITNPLPPVASPPPASKSKEVSD. Positions 423-444 are enriched in low complexity; that stretch reads QASVSESLSSSGVSSADIDSSQ. Pro residues predominate over residues 449–459; sequence PLPPVASPPPA. Residues 605–871 form the PI3K/PI4K catalytic domain; that stretch reads IPETATLFKS…LIDESVHALF (267 aa). The segment at 611-617 is G-loop; that stretch reads LFKSALM. The catalytic loop stretch occupies residues 740–748; that stretch reads GVGDRHLDN. Residues 759-780 form an activation loop region; the sequence is HIDFGYILGRDPKPLPPPMKLN.

Belongs to the PI3/PI4-kinase family. As to quaternary structure, component of the PI3K (PI3KC3/PI3K-III/class III phosphatidylinositol 3-kinase) complex the core of which is composed of the catalytic subunit PIK3C3, the regulatory subunit PIK3R4 and BECN1 associating with additional regulatory/auxiliary subunits to form alternative complex forms. Alternative complex forms containing a fourth regulatory subunit in a mutually exclusive manner are: the PI3K complex I (PI3KC3-C1) containing ATG14, and the PI3K complex II (PI3KC3-C2) containing UVRAG. PI3KC3-C1 displays a V-shaped architecture with PIK3R4 serving as a bridge between PIK3C3 and the ATG14:BECN1 subcomplex. Both, PI3KC3-C1 and PI3KC3-C2, can associate with further regulatory subunits such as RUBCN, SH3GLB1/Bif-1 and AMBRA1. PI3KC3-C1 probably associates with PIK3CB. Interacts with RAB7A in the presence of PIK3R4. Interacts with AMBRA1. Interacts with BECN1P1/BECN2. Interacts with SLAMF1. May interact with DYN2. May be a component of a complex composed of RAB5A (in GDP-bound form), DYN2 and PIK3C3. Interacts with NCKAP1L. Interacts with ATG14; this interaction is increased in the absence of TMEM39A. Interacts with STEEP1; the interaction is STING1-dependent and required for trafficking of STING1 from the endoplasmic reticulum. Interacts with YWHAG. Interacts with ARMC3. It depends on Mn(2+) as a cofactor. In terms of processing, ubiquitinated via 'Lys-29'- and 'Lys-48'-linked ubiquitination by UBE3C, promoting its degradation. Deubiquitination by ZRANB1/TRABID promotes its stabilization, leading to autophagosome maturation.

The protein resides in the midbody. It localises to the late endosome. The protein localises to the cytoplasmic vesicle. Its subcellular location is the autophagosome. It catalyses the reaction a 1,2-diacyl-sn-glycero-3-phospho-(1D-myo-inositol) + ATP = a 1,2-diacyl-sn-glycero-3-phospho-(1D-myo-inositol-3-phosphate) + ADP + H(+). In terms of biological role, catalytic subunit of the PI3K complex that mediates formation of phosphatidylinositol 3-phosphate; different complex forms are believed to play a role in multiple membrane trafficking pathways: PI3KC3-C1 is involved in initiation of autophagosomes and PI3KC3-C2 in maturation of autophagosomes and endocytosis. As part of PI3KC3-C1, promotes endoplasmic reticulum membrane curvature formation prior to vesicle budding. Involved in regulation of degradative endocytic trafficking and required for the abscission step in cytokinesis, probably in the context of PI3KC3-C2. Involved in the transport of lysosomal enzyme precursors to lysosomes. Required for transport from early to late endosomes. The sequence is that of Phosphatidylinositol 3-kinase catalytic subunit type 3 from Rattus norvegicus (Rat).